Here is a 222-residue protein sequence, read N- to C-terminus: Phosphoribosylformylglycinamidine synthase subunit PurQ (222 aa).

Residues 2–222 (KAAVITFPGS…RALLGGMALV (221 aa)) form the Glutamine amidotransferase type-1 domain. Cys-86 serves as the catalytic Nucleophile. Residues His-194 and Glu-196 contribute to the active site.

Part of the FGAM synthase complex composed of 1 PurL, 1 PurQ and 2 PurS subunits.

It localises to the cytoplasm. The enzyme catalyses N(2)-formyl-N(1)-(5-phospho-beta-D-ribosyl)glycinamide + L-glutamine + ATP + H2O = 2-formamido-N(1)-(5-O-phospho-beta-D-ribosyl)acetamidine + L-glutamate + ADP + phosphate + H(+). It catalyses the reaction L-glutamine + H2O = L-glutamate + NH4(+). Its pathway is purine metabolism; IMP biosynthesis via de novo pathway; 5-amino-1-(5-phospho-D-ribosyl)imidazole from N(2)-formyl-N(1)-(5-phospho-D-ribosyl)glycinamide: step 1/2. In terms of biological role, part of the phosphoribosylformylglycinamidine synthase complex involved in the purines biosynthetic pathway. Catalyzes the ATP-dependent conversion of formylglycinamide ribonucleotide (FGAR) and glutamine to yield formylglycinamidine ribonucleotide (FGAM) and glutamate. The FGAM synthase complex is composed of three subunits. PurQ produces an ammonia molecule by converting glutamine to glutamate. PurL transfers the ammonia molecule to FGAR to form FGAM in an ATP-dependent manner. PurS interacts with PurQ and PurL and is thought to assist in the transfer of the ammonia molecule from PurQ to PurL. The chain is Phosphoribosylformylglycinamidine synthase subunit PurQ from Cereibacter sphaeroides (strain ATCC 17023 / DSM 158 / JCM 6121 / CCUG 31486 / LMG 2827 / NBRC 12203 / NCIMB 8253 / ATH 2.4.1.) (Rhodobacter sphaeroides).